Reading from the N-terminus, the 1527-residue chain is Lysophospholipase nte1 (1527 aa).

At Met1–Gly73 the chain is on the cytoplasmic side. Residues Trp74–Ile94 form a helical membrane-spanning segment. Over Thr95–Thr116 the chain is Lumenal. A helical membrane pass occupies residues Met117–Ile137. Topologically, residues Arg138–Ile1527 are cytoplasmic. Residues Gly299 to Ser310 are compositionally biased toward low complexity. 3 disordered regions span residues Gly299–Ser387, Asp567–Asp596, and Ala765–Ser785. Over residues Arg364–Ser377 the composition is skewed to polar residues. A nucleoside 3',5'-cyclic phosphate-binding positions include Gly682–Ser809 and Arg846–Arg966. Residues Leu1224–Lys1388 enclose the PNPLA domain. The GXGXXG motif lies at Gly1228 to Gly1233. A GXSXG motif is present at residues Gly1255 to Gly1259. Catalysis depends on Ser1257, which acts as the Nucleophile. Residue Asp1375 is the Proton acceptor of the active site. The short motif at Asp1375–Gly1377 is the DGA/G element. Positions Leu1504–Ile1527 are disordered.

It belongs to the NTE family.

The protein resides in the endoplasmic reticulum membrane. The catalysed reaction is a 1-acyl-sn-glycero-3-phosphocholine + H2O = sn-glycerol 3-phosphocholine + a fatty acid + H(+). Its activity is regulated as follows. Inhibited by organophosphorus esters. Its function is as follows. Intracellular phospholipase B that catalyzes the double deacylation of phosphatidylcholine (PC) to glycerophosphocholine (GroPCho). Plays an important role in membrane lipid homeostasis. Responsible for the rapid PC turnover in response to inositol, elevated temperatures, or when choline is present in the growth medium. This chain is Lysophospholipase nte1 (nte1), found in Emericella nidulans (strain FGSC A4 / ATCC 38163 / CBS 112.46 / NRRL 194 / M139) (Aspergillus nidulans).